A 150-amino-acid polypeptide reads, in one-letter code: Heavy metal-associated isoprenylated plant protein 24 (150 aa).

Positions 26–89 constitute an HMA domain; that stretch reads QTVALRVARI…AAKSTKKKVE (64 aa). Residues Cys-37 and Cys-40 each coordinate a metal cation. Cys-147 carries the post-translational modification Cysteine methyl ester. Cys-147 is lipidated: S-farnesyl cysteine. Residues 148 to 150 constitute a propeptide, removed in mature form; that stretch reads AIM.

It belongs to the HIPP family. In terms of assembly, interacts with ZHD11/HB29.

Its function is as follows. Heavy-metal-binding protein. This is Heavy metal-associated isoprenylated plant protein 24 from Arabidopsis thaliana (Mouse-ear cress).